The sequence spans 487 residues: Cytochrome P450 2C4 (487 aa).

Cys-432 serves as a coordination point for heme.

This sequence belongs to the cytochrome P450 family. The cofactor is heme.

It localises to the endoplasmic reticulum membrane. The protein resides in the microsome membrane. The enzyme catalyses an organic molecule + reduced [NADPH--hemoprotein reductase] + O2 = an alcohol + oxidized [NADPH--hemoprotein reductase] + H2O + H(+). Functionally, cytochromes P450 are a group of heme-thiolate monooxygenases. In liver microsomes, this enzyme is involved in an NADPH-dependent electron transport pathway. It oxidizes a variety of structurally unrelated compounds, including steroids, fatty acids, and xenobiotics. The polypeptide is Cytochrome P450 2C4 (CYP2C4) (Oryctolagus cuniculus (Rabbit)).